Here is a 1222-residue protein sequence, read N- to C-terminus: Deubiquitinating protein VCPIP1 (1222 aa).

Positions 1-21 (MSQPPPPPPPLPPPPPPPEAP) are enriched in pro residues. Positions 1–36 (MSQPPPPPPPLPPPPPPPEAPQTPSSLASAAASGGL) are disordered. Low complexity predominate over residues 25–36 (SSLASAAASGGL). The region spanning 208 to 361 (LIPVHVDGDG…RNHYIPLVGI (154 aa)) is the OTU domain. The active site involves Asp-216. Cys-219 functions as the Nucleophile in the catalytic mechanism. The active site involves His-354. Residue Lys-408 is modified to N6-acetyllysine. Disordered regions lie at residues 725 to 776 (SVMQ…KEKK), 989 to 1009 (EATT…LGSG), and 1024 to 1074 (AFQG…VFTA). Phosphoserine occurs at positions 747 and 757. Positions 755–771 (PSSAPATPTKAPYSPTT) are enriched in low complexity. Position 763 is a phosphothreonine (Thr-763). Phosphoserine occurs at positions 768, 994, and 998. A compositionally biased stretch (basic and acidic residues) spans 1041–1050 (LDPRARETSV). A compositionally biased stretch (polar residues) spans 1057–1074 (GTDFSNSSTKTEPSVFTA). Ser-1077 is subject to Phosphoserine. Disordered regions lie at residues 1113–1175 (VSSI…TETT) and 1188–1222 (ATRS…MDHS). Residues 1143 to 1157 (VVSSSAKSGSLQTGL) are compositionally biased toward polar residues. Over residues 1163-1175 (LTGGTENLNTETT) the composition is skewed to low complexity. At Ser-1198 the chain carries Phosphoserine. Over residues 1200 to 1209 (EELEEMDSQD) the composition is skewed to acidic residues. A Phosphoserine; by ATM modification is found at Ser-1207. Over residues 1210–1222 (AEMTNTTEPMDHS) the composition is skewed to polar residues.

As to quaternary structure, binds VCP and the ternary complex containing STX5A, NSFL1C and VCP. Post-translationally, phosphorylated at Ser-1207 by ATM or ATR following induction of covalent DNA-protein cross-links (DPCs).

It is found in the nucleus. The protein localises to the cytoplasm. The protein resides in the endoplasmic reticulum. It localises to the golgi apparatus. Its subcellular location is the golgi stack. The enzyme catalyses Thiol-dependent hydrolysis of ester, thioester, amide, peptide and isopeptide bonds formed by the C-terminal Gly of ubiquitin (a 76-residue protein attached to proteins as an intracellular targeting signal).. Deubiquitinating enzyme involved in DNA repair and reassembly of the Golgi apparatus and the endoplasmic reticulum following mitosis. Necessary for VCP-mediated reassembly of Golgi stacks after mitosis. Plays a role in VCP-mediated formation of transitional endoplasmic reticulum (tER). Mediates dissociation of the ternary complex containing STX5A, NSFL1C and VCP. Also involved in DNA repair following phosphorylation by ATM or ATR: acts by catalyzing deubiquitination of SPRTN, thereby promoting SPRTN recruitment to chromatin and subsequent proteolytic cleavage of covalent DNA-protein cross-links (DPCs). Hydrolyzes 'Lys-11'- and 'Lys-48'-linked polyubiquitin chains. In terms of biological role, (Microbial infection) Regulates the duration of C.botulinum neurotoxin type A (BoNT/A) intoxication by catalyzing deubiquitination of Botulinum neurotoxin A light chain (LC), thereby preventing LC degradation by the proteasome, and accelerating botulinum neurotoxin intoxication in patients. The chain is Deubiquitinating protein VCPIP1 from Homo sapiens (Human).